The primary structure comprises 188 residues: FMN-dependent NADPH-azoreductase (188 aa).

Belongs to the azoreductase type 2 family. In terms of assembly, homotetramer. Requires FMN as cofactor.

Functionally, catalyzes the reductive cleavage of azo bond in aromatic azo compounds to the corresponding amines. Requires NADPH, but not NADH, as an electron donor for its activity. This chain is FMN-dependent NADPH-azoreductase (azo1), found in Staphylococcus aureus (strain MSSA476).